The following is a 53-amino-acid chain: MLYYVGADLDSTYKFACFIMKQVKFNDLVKNIKVQINASNIVSFSSKRLVSFA.

The protein localises to the plastid. It is found in the chloroplast. This is an uncharacterized protein from Guillardia theta (Cryptophyte).